The primary structure comprises 333 residues: Holliday junction branch migration complex subunit RuvB (333 aa).

A large ATPase domain (RuvB-L) region spans residues 1–182 (MDERLLSGES…FGVLSRLEYY (182 aa)). Residues Leu-21, Arg-22, Gly-63, Lys-66, Thr-67, Thr-68, 129 to 131 (EDF), Arg-172, Tyr-182, and Arg-219 contribute to the ATP site. Position 67 (Thr-67) interacts with Mg(2+). The tract at residues 183 to 253 (TVDQLSAIVE…ITQMALELLQ (71 aa)) is small ATPAse domain (RuvB-S). The tract at residues 256-333 (KLGLDHIDHK…EHFGMEMPKV (78 aa)) is head domain (RuvB-H). Arg-311 and Arg-316 together coordinate DNA.

This sequence belongs to the RuvB family. In terms of assembly, homohexamer. Forms an RuvA(8)-RuvB(12)-Holliday junction (HJ) complex. HJ DNA is sandwiched between 2 RuvA tetramers; dsDNA enters through RuvA and exits via RuvB. An RuvB hexamer assembles on each DNA strand where it exits the tetramer. Each RuvB hexamer is contacted by two RuvA subunits (via domain III) on 2 adjacent RuvB subunits; this complex drives branch migration. In the full resolvosome a probable DNA-RuvA(4)-RuvB(12)-RuvC(2) complex forms which resolves the HJ.

The protein localises to the cytoplasm. It carries out the reaction ATP + H2O = ADP + phosphate + H(+). Its function is as follows. The RuvA-RuvB-RuvC complex processes Holliday junction (HJ) DNA during genetic recombination and DNA repair, while the RuvA-RuvB complex plays an important role in the rescue of blocked DNA replication forks via replication fork reversal (RFR). RuvA specifically binds to HJ cruciform DNA, conferring on it an open structure. The RuvB hexamer acts as an ATP-dependent pump, pulling dsDNA into and through the RuvAB complex. RuvB forms 2 homohexamers on either side of HJ DNA bound by 1 or 2 RuvA tetramers; 4 subunits per hexamer contact DNA at a time. Coordinated motions by a converter formed by DNA-disengaged RuvB subunits stimulates ATP hydrolysis and nucleotide exchange. Immobilization of the converter enables RuvB to convert the ATP-contained energy into a lever motion, pulling 2 nucleotides of DNA out of the RuvA tetramer per ATP hydrolyzed, thus driving DNA branch migration. The RuvB motors rotate together with the DNA substrate, which together with the progressing nucleotide cycle form the mechanistic basis for DNA recombination by continuous HJ branch migration. Branch migration allows RuvC to scan DNA until it finds its consensus sequence, where it cleaves and resolves cruciform DNA. In Bacillus anthracis (strain A0248), this protein is Holliday junction branch migration complex subunit RuvB.